The primary structure comprises 493 residues: Ribose import ATP-binding protein RbsA (493 aa).

ABC transporter domains lie at 3–239 (IEMK…VGRE) and 246–493 (KRTP…TGGR). Residue 35-42 (GENGAGKS) participates in ATP binding.

This sequence belongs to the ABC transporter superfamily. Ribose importer (TC 3.A.1.2.1) family. As to quaternary structure, the complex is composed of an ATP-binding protein (RbsA), two transmembrane proteins (RbsC) and a solute-binding protein (RbsB).

The protein localises to the cell membrane. The catalysed reaction is D-ribose(out) + ATP + H2O = D-ribose(in) + ADP + phosphate + H(+). Its function is as follows. Part of the ABC transporter complex RbsABC involved in ribose import. Responsible for energy coupling to the transport system. In Bacillus subtilis (strain 168), this protein is Ribose import ATP-binding protein RbsA.